Reading from the N-terminus, the 598-residue chain is Transcription factor dpl-1 (598 aa).

Disordered stretches follow at residues 1-73, 435-457, and 573-598; these read MNPT…PTGL, NRPYSTVPPDRRLSTGATSVNSG, and TEQPMTSAQAAALIQHPQPEEYDYFQ. Polar residues predominate over residues 13 to 22; it reads PAQSRPQVSL. A compositionally biased stretch (gly residues) spans 55–64; the sequence is GVGGSSGAGG.

This sequence belongs to the E2F/DP family. In terms of assembly, component of the DRM complex, at least composed of lin-9, lin-35, lin-37, lin-52, lin-53, lin-54- dpl-1 and efl-1. Interacts (via N-terminus) with efl-1. Interacts (via C-terminus) with lin-35 (via C-terminus).

The protein resides in the nucleus. Functionally, synthetic multivulva class B (synMuvB) protein. SynMuvB proteins are required to repress the induction of vulval development by Ras signaling and probably act by forming the multiprotein DRM complex that represses transcription. May also negatively regulate vulval development in association with other SynMuv class B proteins such as lin-15A. Can stimulate E2F-dependent transcription. Plays a role in negatively regulating the progression through the G1 phase of the cell cycle during postembryonic development, most likely by acting as a transcriptional repressor in association with the cell cycle regulatory factor efl-1 and the transcriptional repressor lin-35, but may also act as a positive regulator of cell cycle entry. Involved in the regulation of intestinal cell division during postembryonic development, most likely in complex with efl-1 and lin-35. Promotes germ cell programmed cell death, probably together with efl-1, by positively regulating the expression of the apoptosis proteins ced-3 and ced-4. In particular, positively regulates the expression of ced-4 in response to starvation. Its role in programmed cell death may be in conjunction with cell cycle regulatory factor efl-1 and the synthetic multivulva class B proteins lin-35, lin-37 and lin-52, and is independent of the ced-1, ced-8 and ced-9 pathways. The protein is Transcription factor dpl-1 of Caenorhabditis elegans.